A 576-amino-acid polypeptide reads, in one-letter code: Arginine--tRNA ligase (576 aa).

The 'HIGH' region motif lies at 122 to 132; that stretch reads PNVAKEMHVGH.

Belongs to the class-I aminoacyl-tRNA synthetase family. In terms of assembly, monomer.

Its subcellular location is the cytoplasm. The enzyme catalyses tRNA(Arg) + L-arginine + ATP = L-arginyl-tRNA(Arg) + AMP + diphosphate. This Sodalis glossinidius (strain morsitans) protein is Arginine--tRNA ligase.